The sequence spans 330 residues: Ketol-acid reductoisomerase (NADP(+)) (330 aa).

A KARI N-terminal Rossmann domain is found at 2 to 182; that stretch reads VEIYYDDDAS…GGTRAGALRT (181 aa). NADP(+)-binding positions include 25–28, S51, and S53; that span reads YGSQ. The active site involves H108. G134 serves as a coordination point for NADP(+). A KARI C-terminal knotted domain is found at 183 to 328; the sequence is TFTEETETDL…AKLRPLMSWI (146 aa). Mg(2+)-binding residues include D191, E195, E227, and E231. Residue S252 coordinates substrate.

The protein belongs to the ketol-acid reductoisomerase family. The cofactor is Mg(2+).

The catalysed reaction is (2R)-2,3-dihydroxy-3-methylbutanoate + NADP(+) = (2S)-2-acetolactate + NADPH + H(+). It catalyses the reaction (2R,3R)-2,3-dihydroxy-3-methylpentanoate + NADP(+) = (S)-2-ethyl-2-hydroxy-3-oxobutanoate + NADPH + H(+). It functions in the pathway amino-acid biosynthesis; L-isoleucine biosynthesis; L-isoleucine from 2-oxobutanoate: step 2/4. Its pathway is amino-acid biosynthesis; L-valine biosynthesis; L-valine from pyruvate: step 2/4. In terms of biological role, involved in the biosynthesis of branched-chain amino acids (BCAA). Catalyzes an alkyl-migration followed by a ketol-acid reduction of (S)-2-acetolactate (S2AL) to yield (R)-2,3-dihydroxy-isovalerate. In the isomerase reaction, S2AL is rearranged via a Mg-dependent methyl migration to produce 3-hydroxy-3-methyl-2-ketobutyrate (HMKB). In the reductase reaction, this 2-ketoacid undergoes a metal-dependent reduction by NADPH to yield (R)-2,3-dihydroxy-isovalerate. This chain is Ketol-acid reductoisomerase (NADP(+)), found in Frankia alni (strain DSM 45986 / CECT 9034 / ACN14a).